The sequence spans 101 residues: Small ribosomal subunit protein uS14 (101 aa).

This sequence belongs to the universal ribosomal protein uS14 family. In terms of assembly, part of the 30S ribosomal subunit. Contacts proteins S3 and S10.

Its function is as follows. Binds 16S rRNA, required for the assembly of 30S particles and may also be responsible for determining the conformation of the 16S rRNA at the A site. This is Small ribosomal subunit protein uS14 from Xylella fastidiosa (strain 9a5c).